Consider the following 239-residue polypeptide: Ribonuclease PH (239 aa).

Residues Arg86 and 124-126 each bind phosphate; that span reads GTR.

The protein belongs to the RNase PH family. Homohexameric ring arranged as a trimer of dimers.

The enzyme catalyses tRNA(n+1) + phosphate = tRNA(n) + a ribonucleoside 5'-diphosphate. Its function is as follows. Phosphorolytic 3'-5' exoribonuclease that plays an important role in tRNA 3'-end maturation. Removes nucleotide residues following the 3'-CCA terminus of tRNAs; can also add nucleotides to the ends of RNA molecules by using nucleoside diphosphates as substrates, but this may not be physiologically important. Probably plays a role in initiation of 16S rRNA degradation (leading to ribosome degradation) during starvation. The polypeptide is Ribonuclease PH (Anaeromyxobacter dehalogenans (strain 2CP-C)).